We begin with the raw amino-acid sequence, 335 residues long: Protein FATTY ACID EXPORT 3, chloroplastic (335 aa).

The transit peptide at 1–72 directs the protein to the chloroplast; it reads MMSIPMELMS…PEVLLNRSVV (72 aa). The tract at residues 82–101 is disordered; that stretch reads GESGVEVGKEKSDIDVEDDT. Residues 88 to 101 are compositionally biased toward basic and acidic residues; the sequence is VGKEKSDIDVEDDT. Residues 101–160 are a coiled coil; it reads TSKEAWKQTLESFKEQVSKMQSVSSEAYSVNSQKAMTVLKETSEQLRIQAEKAKEELGTK. The next 3 membrane-spanning stretches (helical) occupy residues 205–225, 228–248, and 286–306; these read FHVGIPYGLLLLVGGFINFMV, SIPAIRFGVILGGALFALSLA, and STFLGFFTTLTSGGVLGFYLY. A disordered region spans residues 316–335; that stretch reads PTLEDGGEDESSDGFVRSEG.

This sequence belongs to the TMEM14 family.

Its subcellular location is the plastid. It is found in the chloroplast membrane. May be involved in free fatty acids export from the plastids. This is Protein FATTY ACID EXPORT 3, chloroplastic from Arabidopsis thaliana (Mouse-ear cress).